We begin with the raw amino-acid sequence, 98 residues long: DNA-binding protein Fis (98 aa).

The H-T-H motif DNA-binding region spans 74-93 (QTRAALMLGINRSTLRKKLK).

This sequence belongs to the transcriptional regulatory Fis family. Homodimer.

Functionally, activates ribosomal RNA transcription. Plays a direct role in upstream activation of rRNA promoters. The chain is DNA-binding protein Fis from Buchnera aphidicola subsp. Acyrthosiphon pisum (strain 5A).